The sequence spans 152 residues: Probable flagellum biosynthesis repressor protein FlbT (152 aa).

This sequence belongs to the FlbT family.

Has a post-transcriptional repressor function in flagellum biogenesis. Associates with the 5'-UTR of fljK mRNA and promotes its degradation. This Brucella canis (strain ATCC 23365 / NCTC 10854 / RM-666) protein is Probable flagellum biosynthesis repressor protein FlbT.